The following is a 207-amino-acid chain: MSPIQEQLTALGGVFLAAVLVDRIAKTGQVSEAALSCMLGSLLIRDPKDTLEVYGGDDINLREGYRALIGALERDPSTLQREPLRYALSMLGLERQLAKRDDLLETIGKRLPQIQSQVEHFGPAHENVIAACGGLYQDTLSTLRQRIQVHGDMRNLQQPSNASKIRALLLAGIRSARLWRQLGGHRWQLVISRRKLLKELYPLMRSS.

This sequence belongs to the HflD family.

It localises to the cytoplasm. It is found in the cell inner membrane. The polypeptide is High frequency lysogenization protein HflD homolog (Pseudomonas fluorescens (strain ATCC BAA-477 / NRRL B-23932 / Pf-5)).